Reading from the N-terminus, the 577-residue chain is Outer spore wall assembly protein SHE10 (577 aa).

An N-terminal signal peptide occupies residues 1–23 (MGKLIKLITTLTVLVSLLQYCCE). 2 coiled-coil regions span residues 379–416 (NETR…ENVE) and 513–561 (ILRS…EEDV). The segment covering 525-545 (RERKERERKEREKAAAEEFQR) has biased composition (basic and acidic residues). A disordered region spans residues 525 to 577 (RERKERERKEREKAAAEEFQRQQELLRQQEEEDEEDVSYTSTSTITTTTTMTL). Over residues 562–577 (SYTSTSTITTTTTMTL) the composition is skewed to low complexity.

The protein belongs to the SHE10 family. In terms of assembly, component of the mitochondria-localized RNase mitochondrial RNA-processing (RNase MRP) composed of one single RNA encoded by the NME1 gene and at least 31 proteins. Absent in the nucleus-localized RNase MRP (NuMRP).

It is found in the mitochondrion. Its function is as follows. Involved in spore wall assembly. May be a component of the mitochondrial RNase MRP (MtMRP), a ribonucleoprotein endoribonuclease involved in the cleaving RNA transcripts to generate primers for DNA replication in mitochondria. The chain is Outer spore wall assembly protein SHE10 from Saccharomyces cerevisiae (strain Lalvin EC1118 / Prise de mousse) (Baker's yeast).